The primary structure comprises 397 residues: Polygalacturonase (397 aa).

A signal peptide spans 1 to 22 (MGSYLGIYTILVLCLLGYSANA). 4 PbH1 repeats span residues 169 to 195 (GKNM…HLGR), 196 to 217 (CEGV…SVGD), 219 to 239 (MKNL…SVGS), and 249 to 270 (VTDI…RIKT). Asn171 is a glycosylation site (N-linked (GlcNAc...) asparagine). The active-site Proton donor is Asp210. An intrachain disulfide couples Cys212 to Cys229. The active site involves His233. Residue Asn256 is glycosylated (N-linked (GlcNAc...) asparagine). Cystine bridges form between Cys341/Cys347 and Cys370/Cys386.

It belongs to the glycosyl hydrolase 28 family. As to expression, pollen.

It localises to the secreted. It is found in the cell wall. The catalysed reaction is (1,4-alpha-D-galacturonosyl)n+m + H2O = (1,4-alpha-D-galacturonosyl)n + (1,4-alpha-D-galacturonosyl)m.. Functionally, may function in depolymerizing pectin during pollen development, germination, and tube growth. In Brassica napus (Rape), this protein is Polygalacturonase.